We begin with the raw amino-acid sequence, 597 residues long: Cytosolic Fe-S cluster assembly factor nar1 (597 aa).

Cys20, Cys62, Cys65, Cys68, Cys216, and Cys271 together coordinate [4Fe-4S] cluster. Positions 428–449 (RASRLPGGNRRLPVGRGAASGS) are disordered. Residues Cys462 and Cys466 each coordinate [4Fe-4S] cluster. The tract at residues 479–505 (REASSSVQSSTSAEVPDSSSKPTPHEQ) is disordered.

The protein belongs to the NARF family.

In terms of biological role, component of the cytosolic Fe/S protein assembly machinery. Required for maturation of extramitochondrial Fe/S proteins. May play a role in the transfer of pre-assembled Fe/S clusters to target apoproteins. This is Cytosolic Fe-S cluster assembly factor nar1 (nar1) from Aspergillus niger (strain ATCC MYA-4892 / CBS 513.88 / FGSC A1513).